The primary structure comprises 187 residues: V-type ATP synthase subunit E (187 aa).

This sequence belongs to the V-ATPase E subunit family.

Functionally, produces ATP from ADP in the presence of a proton gradient across the membrane. This chain is V-type ATP synthase subunit E, found in Clostridioides difficile (strain 630) (Peptoclostridium difficile).